We begin with the raw amino-acid sequence, 184 residues long: PLASMODESMATA CALLOSE-BINDING PROTEIN 3 (184 aa).

The first 19 residues, 1–19, serve as a signal peptide directing secretion; that stretch reads MAVFVLVMILLAMAGHSSG. A disulfide bridge links Cys-22 with Cys-84. The disordered stretch occupies residues 109–146; the sequence is SGSGTTTPVTTTPSTRVPTTTNTRPYTITPSTGGGLGI. Low complexity predominate over residues 113 to 139; sequence TTTPVTTTPSTRVPTTTNTRPYTITPS. Ser-158 carries GPI-anchor amidated serine lipidation. A propeptide spans 159–184 (removed in mature form); sequence FGFKLQSPRFGFIVLFTLFLPFYLFS.

Post-translationally, contains two additional disulfide bonds. In terms of tissue distribution, expressed in the shoot apical region and in young leaves but also detected in the laminar and vasculature of mature leaves.

Its subcellular location is the cell membrane. It localises to the cell junction. The protein localises to the plasmodesma. The chain is PLASMODESMATA CALLOSE-BINDING PROTEIN 3 (PDCB3) from Arabidopsis thaliana (Mouse-ear cress).